The following is a 953-amino-acid chain: Nucleotide-binding oligomerization domain-containing protein 1 (953 aa).

One can recognise a CARD domain in the interval 15–105 (ESHPHIQLLK…AYVDLRPWLL (91 aa)). In terms of domain architecture, NACHT spans 196 to 531 (ETIFILGDAG…AFFTAFFLVL (336 aa)). 202 to 209 (GDAGVGKS) is a binding site for ATP. 2 S-palmitoyl cysteine lipidation sites follow: C558 and C567. LRR repeat units lie at residues 632–656 (LKSLPRVQVESFNQVQAMPTFIWML), 702–725 (FPKRLALDLDNNNLNDYGVRELQP), 727–750 (FSRLTVLRLSVNQITDGGVKVLSE), 755–778 (YKIVTYLGLYNNQITDVGARYVTK), 783–806 (CKGLTHLKLGKNKITSEGGKYLAL), 839–862 (HPSLTTLSLASNGISTEGGKSLAR), 867–891 (NTSLEILWLTQNELNDEVAESLAEM), 895–918 (NQTLKHLWLIQNQITAKGTAQLAD), and 923–946 (NTGITEICLNGNLIKPEEAKVYED). The S-palmitoyl cysteine moiety is linked to residue C952.

It belongs to the NOD1-NOD2 family. In terms of assembly, homooligomer: homooligomerizes following ligand-binding, promoting RIPK2 recruitment. Interacts (via CARD domain) with RIPK2 (via CARD domain). Following RIPK2 recruitment, RIPK2 homooligomerizes via its CARD domain and forms long filaments named RIPosomes. Interacts with ARHGEF2. Interacts (via CARD domain) with ubiquitin; inhibiting interaction with RIPK2. Interacts with NLRP10 and recruits it to the cell membrane following invasive bacterial infection. Interacts with IFIH1; this interaction promotes transcription of antiviral genes and inhibition of viral replication. Interacts with IRGM; promoting NOD1 degradation. Interacts with ATG16L1. Palmitoylated. Palmitoylation is required for proper recruitment to the bacterial entry site and hence for proper signaling upon cognate peptidoglycan detection. Post-translationally, ubiquitinated. 'Lys-48'-linked polyubiquitination by RNF34 promotes proteasomal degradation and thereby negatively regulates NOD1 for instance in NF-kappa-B activation. In terms of processing, degraded via selective autophagy following interaction with IRGM. IRGM promotes NOD1-RIPK2 RIPosome recruitment to autophagosome membranes, promoting their SQSTM1/p62-dependent autophagic degradation. In terms of tissue distribution, highly expressed in adult heart, skeletal muscle, pancreas, spleen and ovary. Also detected in placenta, lung, liver, kidney, thymus, testis, small intestine and colon.

It is found in the cell membrane. The protein localises to the apical cell membrane. The protein resides in the basolateral cell membrane. Its subcellular location is the cytoplasm. Functionally, pattern recognition receptor (PRR) that detects bacterial peptidoglycan fragments and other danger signals and thus participates in both innate and adaptive immune responses. Specifically recognizes and binds gamma-D-glutamyl-meso-diaminopimelic acid (iE-DAP), a dipeptide present in peptidoglycan of Gram-negative bacteria. Preferentially binds iE-DAP in tripeptide-containing muropeptides (MurNAc-TriDAP or TriDAP). Ligand binding triggers oligomerization that facilitates the binding and subsequent activation of the proximal adapter receptor-interacting RIPK2. Following recruitment, RIPK2 undergoes 'Met-1'- (linear) and 'Lys-63'-linked polyubiquitination by E3 ubiquitin-protein ligases XIAP, BIRC2, BIRC3 and the LUBAC complex, becoming a scaffolding protein for downstream effectors, triggering activation of the NF-kappa-B and MAP kinases signaling. This in turn leads to the transcriptional activation of hundreds of genes involved in immune response. Also acts as a regulator of antiviral response elicited by dsRNA and the expression of RLR pathway members by targeting IFIH1 and TRAF3 to modulate the formation of IFIH1-MAVS and TRAF3-MAVS complexes leading to increased transcription of type I IFNs. Also acts as a regulator of autophagy via its interaction with ATG16L1, possibly by recruiting ATG16L1 at the site of bacterial entry. Besides recognizing pathogens, also involved in the endoplasmic reticulum stress response: acts by sensing and binding to the cytosolic metabolite sphingosine-1-phosphate generated in response to endoplasmic reticulum stress, initiating an inflammation process that leads to activation of the NF-kappa-B and MAP kinases signaling. In addition, plays a role in insulin trafficking in beta cells in a cell-autonomous manner. Mechanistically, upon recognizing cognate ligands, NOD1 and RIPK2 localize to insulin vesicles where they recruit RAB1A to direct insulin trafficking through the cytoplasm. In terms of biological role, in contrast to isoform 1, does not efficiently recognize and bind gamma-D-glutamyl-meso-diaminopimelic acid (iE-DAP) ligand. This chain is Nucleotide-binding oligomerization domain-containing protein 1, found in Homo sapiens (Human).